The sequence spans 668 residues: Protein IQ-DOMAIN 14 (668 aa).

Positions M1 to I11 are calmodulin-binding. Disordered stretches follow at residues T16–I54 and G66–V305. Positions H18–S31 are enriched in basic and acidic residues. Residues G32–L43 are compositionally biased toward basic residues. Over residues P78–A96 the composition is skewed to pro residues. Composition is skewed to low complexity over residues S97–A120 and P166–P175. Pro residues predominate over residues P269–S279. IQ domains follow at residues Q321–L350 and A343–Q372. Disordered stretches follow at residues A399–A431 and S476–S561. Residues V415–A431 show a composition bias toward basic and acidic residues. A compositionally biased stretch (polar residues) spans D516–T529.

This sequence belongs to the IQD family. As to quaternary structure, binds to multiple calmodulin (CaM) in the presence of Ca(2+) and CaM-like proteins. As to expression, expressed in hypocotyls, cotyledons, leaves and petioles.

It localises to the cell membrane. It is found in the cytoplasm. Its subcellular location is the cytoskeleton. May be involved in cooperative interactions with calmodulins or calmodulin-like proteins. Recruits calmodulin proteins to microtubules, thus being a potential scaffold in cellular signaling and trafficking. Regulates cell and organ shapes (prevents twisting) in aerial parts probably by regulating transverse microtubules (MT) arrays alignment. Regulates the formation of oval xylem secondary cell-wall deposition pits through microtubule-dependent lateral inhibition of Rho GTPase domains, thus confining the area of active ROP domains within the lattice of the cortical microtubules. May associate with nucleic acids and regulate gene expression at the transcriptional or post-transcriptional level. The polypeptide is Protein IQ-DOMAIN 14 (Arabidopsis thaliana (Mouse-ear cress)).